The chain runs to 217 residues: 3,4-dihydroxy-2-butanone 4-phosphate synthase (217 aa).

D-ribulose 5-phosphate is bound by residues 37–38, aspartate 42, 150–154, and glutamate 174; these read RE and RGGHT. Glutamate 38 contacts Mg(2+). Mg(2+) is bound at residue histidine 153.

It belongs to the DHBP synthase family. In terms of assembly, homodimer. Mg(2+) serves as cofactor. It depends on Mn(2+) as a cofactor.

The catalysed reaction is D-ribulose 5-phosphate = (2S)-2-hydroxy-3-oxobutyl phosphate + formate + H(+). It functions in the pathway cofactor biosynthesis; riboflavin biosynthesis; 2-hydroxy-3-oxobutyl phosphate from D-ribulose 5-phosphate: step 1/1. In terms of biological role, catalyzes the conversion of D-ribulose 5-phosphate to formate and 3,4-dihydroxy-2-butanone 4-phosphate. The sequence is that of 3,4-dihydroxy-2-butanone 4-phosphate synthase from Klebsiella pneumoniae subsp. pneumoniae (strain ATCC 700721 / MGH 78578).